An 845-amino-acid polypeptide reads, in one-letter code: SLIT and NTRK-like protein 2 (845 aa).

Positions 1–21 (MLSGVWFLSVLTVAGILQTES) are cleaved as a signal peptide. The Extracellular segment spans residues 22–621 (RKTAKDICKI…LHTEVPLSVL (600 aa)). Disulfide bonds link Cys-29–Cys-35 and Cys-33–Cys-46. LRR repeat units follow at residues 63 to 84 (RIYQLFLNGNLLTRLYPNEFVN), 87 to 108 (NAVTLHLGNNGLQEIRTGAFSG), 111 to 132 (TLKRLHLNNNKLEILREDTFLG), 135 to 156 (SLEYLQADYNYISAIEAGAFSK), 159 to 180 (KLKVLILNDNLLLSLPSNVFRF), and 182 to 203 (LLTHLDLRGNRLKVMPFAGVLE). Residue Asn-84 is glycosylated (N-linked (GlcNAc...) asparagine). Residues 167 to 215 (DNLLLSLPSNVFRFVLLTHLDLRGNRLKVMPFAGVLEHIGGIMEIQLEE) are required for interaction with PTPRD. The region spanning 216–265 (NPWNCTCDLLPLKAWLDTITVFVGEIVCETPFRLHGKDVTQLTRQDLCPR) is the LRRCT 1 domain. 2 cysteine pairs are disulfide-bonded: Cys-220/Cys-243 and Cys-222/Cys-263. A disordered region spans residues 263-321 (CPRKSASDSSQRGSHADTHVQRLSPTMNPALNPTRAPKASRPPKMRNRPTPRVTVSKDR). Polar residues predominate over residues 283–293 (QRLSPTMNPAL). Residues 331–373 (QTKSPVPLTCPSSCVCTSQSSDNGLNVNCQERKFTNISDLQPK) form the LRRNT domain. LRR repeat units lie at residues 376–397 (SPKKLYLTGNYLQTVYKNDLLE), 400–421 (SLDLLHLGNNRIAVIQEGAFTN), 424–445 (SLRRLYLNGNYLEVLYPSMFDG), 448–469 (SLQYLYLEYNVIKEIKPLTFDA), 472–493 (NLQLLFLNNNLLRSLPDNIFGG), and 495–516 (ALTRLNLRNNHFSHLPVKGVLD). N-linked (GlcNAc...) asparagine glycosylation is present at Asn-421. The LRRCT 2 domain maps to 529–580 (NPWDCTCDIMGLKDWTEHANSPVIINEVTCESPAKHAGEILKFLGREAICPD). Residues 622–642 (ILGLLVVFILSVCFGAGLFVF) traverse the membrane as a helical segment. Residues 643–845 (VLKRRKGVPS…LEKQTAISQL (203 aa)) are Cytoplasmic-facing. Position 756 is a phosphotyrosine (Tyr-756).

The protein belongs to the SLITRK family. As to quaternary structure, interacts with PTPRD; this interaction is PTPRD splicing-dependent and may induce pre-synaptic differentiation. Interacts with NTRK2. Expressed predominantly in the cerebral cortex of the brain but also at low levels in the spinal cord and medulla. Also expressed in some astrocytic brain tumors such as astrocytomas, oligodendrogliomas, glioblastomas, gangliogliomas and primitive neuroectodermal tumors.

The protein resides in the membrane. The protein localises to the cell membrane. It is found in the cell projection. It localises to the dendrite. It is involved in synaptogenesis and promotes excitatory synapse differentiation. Suppresses neurite outgrowth. Involved in the negative regulation of NTRK2. This chain is SLIT and NTRK-like protein 2 (SLITRK2), found in Homo sapiens (Human).